The primary structure comprises 166 residues: MNKINLKNFYLNLVIILVVFIFDRTTKLYILKLAEVETSVDIYITPFLNLFLIWNKGIAFGLFSIDGSVIYNSITILIGLIIIAIIFMMLKNDNIQRYFFALIAGGAFGNFYDRIVYTAVPDFIDLHFYGFHWFVFNVADIFITIGVFCLILVELFFNNKKTNEKN.

A run of 4 helical transmembrane segments spans residues 11–31 (LNLV…LYIL), 42–62 (IYIT…AFGL), 69–89 (VIYN…IFMM), and 99–119 (FFAL…VYTA). Active-site residues include aspartate 122 and aspartate 140. The helical transmembrane segment at 133 to 153 (WFVFNVADIFITIGVFCLILV) threads the bilayer.

The protein belongs to the peptidase A8 family.

It is found in the cell inner membrane. It carries out the reaction Release of signal peptides from bacterial membrane prolipoproteins. Hydrolyzes -Xaa-Yaa-Zaa-|-(S,diacylglyceryl)Cys-, in which Xaa is hydrophobic (preferably Leu), and Yaa (Ala or Ser) and Zaa (Gly or Ala) have small, neutral side chains.. It functions in the pathway protein modification; lipoprotein biosynthesis (signal peptide cleavage). In terms of biological role, this protein specifically catalyzes the removal of signal peptides from prolipoproteins. This chain is Lipoprotein signal peptidase, found in Pelagibacter ubique (strain HTCC1062).